We begin with the raw amino-acid sequence, 139 residues long: Orientotoxin-2 (139 aa).

Expressed by the venom gland.

Its subcellular location is the secreted. The catalysed reaction is a 1,2-diacyl-sn-glycero-3-phosphocholine + H2O = a 1-acyl-sn-glycero-3-phosphocholine + a fatty acid + H(+). Has a highly toxic phospholipase A2 activity. The chain is Orientotoxin-2 from Vespa orientalis (Oriental hornet).